The sequence spans 79 residues: uncharacterized protein (79 aa).

This is an uncharacterized protein from Streptomyces lividans.